Reading from the N-terminus, the 693-residue chain is Subtilisin-like protease SBT4.10 (693 aa).

The N-terminal stretch at 1-25 is a signal peptide; that stretch reads MAKLREASFCALACVLVLFLSFVSA. Positions 26 to 113 are cleaved as a propeptide — activation peptide; sequence DTYNRQDKQV…VFPSKKYKLH (88 aa). The 79-residue stretch at 35–113 folds into the Inhibitor I9 domain; it reads VYVVYMGSLP…VFPSKKYKLH (79 aa). Positions 117 to 536 constitute a Peptidase S8 domain; the sequence is SWDFMGLKEG…SGHIDPIAAI (420 aa). Aspartate 145 functions as the Charge relay system in the catalytic mechanism. Asparagine 176 carries N-linked (GlcNAc...) asparagine glycosylation. Histidine 200 serves as the catalytic Charge relay system. Residues asparagine 215, asparagine 223, asparagine 368, asparagine 413, and asparagine 467 are each glycosylated (N-linked (GlcNAc...) asparagine). Positions 354-396 constitute a PA domain; the sequence is QYPLVYETSVEKCNNESLTTLALSFLTLTPQSNEQIISMFHTL. Residue serine 475 is the Charge relay system of the active site. Residues asparagine 559, asparagine 603, and asparagine 613 are each glycosylated (N-linked (GlcNAc...) asparagine).

This sequence belongs to the peptidase S8 family. The C-terminal propeptide is autocleaved.

It is found in the secreted. The polypeptide is Subtilisin-like protease SBT4.10 (Arabidopsis thaliana (Mouse-ear cress)).